Reading from the N-terminus, the 532-residue chain is Protein PTST homolog 2, chloroplastic (532 aa).

The N-terminal 71 residues, 1-71 (MVSINSGPIS…KPRKKSCCSR (71 aa)), are a transit peptide targeting the chloroplast. Disordered stretches follow at residues 165-201 (QLPN…SRND), 256-292 (EVDG…SETW), 314-347 (SSGL…EDVN), and 367-388 (HSLR…TAGN). Residues 173–183 (EMDKTLNHGDL) are compositionally biased toward basic and acidic residues. Basic and acidic residues predominate over residues 320-339 (VKKDDTKKDSGDSMNGKDRI). Residues 389–454 (LENLSDDWEY…ASRALRLLRT (66 aa)) are a coiled coil.

Interacts with PTST3 and SS4. Interacts with MFP1; the interaction is essential for the initiation of starch granules biosynthesis in leaf chloroplasts, for the correct location of the process in the stromal spaces between the thylakoid membranes, and for the association of this protein with the thylakoid membranes. Interacts with PII1/MRC; the interaction is essential for the initiation of starch granules biosynthesis in leaf chloroplasts.

It localises to the plastid. Its subcellular location is the chloroplast. It is found in the chloroplast thylakoid membrane. In terms of biological role, involved in starch granule initiation in leaf chloroplasts. Binds and delivers suitable maltooligosaccharide substrates to starch synthase 4 (SS4). The chain is Protein PTST homolog 2, chloroplastic from Arabidopsis thaliana (Mouse-ear cress).